Here is a 355-residue protein sequence, read N- to C-terminus: Phenylalanine--tRNA ligase alpha subunit (355 aa).

Mg(2+) is bound at residue E273.

This sequence belongs to the class-II aminoacyl-tRNA synthetase family. Phe-tRNA synthetase alpha subunit type 1 subfamily. As to quaternary structure, tetramer of two alpha and two beta subunits. Mg(2+) is required as a cofactor.

The protein resides in the cytoplasm. The catalysed reaction is tRNA(Phe) + L-phenylalanine + ATP = L-phenylalanyl-tRNA(Phe) + AMP + diphosphate + H(+). The sequence is that of Phenylalanine--tRNA ligase alpha subunit from Bifidobacterium animalis subsp. lactis (strain AD011).